Consider the following 74-residue polypeptide: Brevinin-2Ef (74 aa).

The signal sequence occupies residues 1-22 (MFTMKKSLLLIFFLGTISLSLC). A propeptide spanning residues 23–41 (QEERNADDDDGEMTEEEKR) is cleaved from the precursor. Cysteine 68 and cysteine 74 are oxidised to a cystine.

Belongs to the frog skin active peptide (FSAP) family. Brevinin subfamily. As to expression, expressed by the skin glands.

The protein resides in the secreted. Its function is as follows. Shows antibacterial activity against representative Gram-negative and Gram-positive bacterial species, and hemolytic activity. The chain is Brevinin-2Ef from Pelophylax lessonae (Pool frog).